The following is a 360-amino-acid chain: Protein Wnt-2 (360 aa).

Positions 1 to 26 are cleaved as a signal peptide; that stretch reads MNAPLGGIWLWLPLLLTWLTPEVSSS. 11 disulfide bridges follow: cysteine 76–cysteine 87, cysteine 127–cysteine 135, cysteine 137–cysteine 157, cysteine 206–cysteine 220, cysteine 208–cysteine 215, cysteine 278–cysteine 309, cysteine 294–cysteine 304, cysteine 308–cysteine 348, cysteine 324–cysteine 339, cysteine 326–cysteine 336, and cysteine 331–cysteine 332. Serine 212 carries the O-palmitoleoyl serine; by PORCN lipid modification. An N-linked (GlcNAc...) asparagine glycan is attached at asparagine 295.

The protein belongs to the Wnt family. In terms of processing, palmitoleoylation is required for efficient binding to frizzled receptors. Depalmitoleoylation leads to Wnt signaling pathway inhibition.

The protein localises to the secreted. It is found in the extracellular space. Its subcellular location is the extracellular matrix. In terms of biological role, ligand for members of the frizzled family of seven transmembrane receptors. Probable developmental protein. May be a signaling molecule which affects the development of discrete regions of tissues. Is likely to signal over only few cell diameters. The protein is Protein Wnt-2 (WNT2) of Eulemur macaco macaco (Black lemur).